Reading from the N-terminus, the 204-residue chain is Peptidyl-tRNA hydrolase (204 aa).

Tyrosine 19 contributes to the tRNA binding site. Residue histidine 24 is the Proton acceptor of the active site. TRNA-binding residues include tyrosine 70, asparagine 72, and asparagine 118.

The protein belongs to the PTH family. In terms of assembly, monomer.

It is found in the cytoplasm. The catalysed reaction is an N-acyl-L-alpha-aminoacyl-tRNA + H2O = an N-acyl-L-amino acid + a tRNA + H(+). Its function is as follows. Hydrolyzes ribosome-free peptidyl-tRNAs (with 1 or more amino acids incorporated), which drop off the ribosome during protein synthesis, or as a result of ribosome stalling. Functionally, catalyzes the release of premature peptidyl moieties from peptidyl-tRNA molecules trapped in stalled 50S ribosomal subunits, and thus maintains levels of free tRNAs and 50S ribosomes. The sequence is that of Peptidyl-tRNA hydrolase from Prochlorococcus marinus (strain SARG / CCMP1375 / SS120).